A 624-amino-acid polypeptide reads, in one-letter code: Glycosyltransferase AglD (624 aa).

D201 is an active-site residue. 8 helical membrane passes run 260–280 (VTIV…TLYI), 285–305 (VISV…VIYV), 381–401 (LLTI…TGGL), 427–447 (AAYV…GIAL), 496–518 (VGLT…LLAL), 532–552 (FFAV…GGVG), 556–576 (IAFT…ALAA), and 587–607 (VTIV…TTAV).

This sequence belongs to the glycosyltransferase 2 family.

It localises to the cell membrane. It functions in the pathway cell surface structure biogenesis; S-layer biogenesis. Functionally, involved in the assembly of a N-linked pentasaccharide that decorates the S-layer glycoprotein and flagellins. Catalyzes the addition of the mannose found at position 5 of the pentasaccharide to its own distinct dolichol phosphate carrier. This is Glycosyltransferase AglD (aglD) from Haloferax volcanii (strain ATCC 29605 / DSM 3757 / JCM 8879 / NBRC 14742 / NCIMB 2012 / VKM B-1768 / DS2) (Halobacterium volcanii).